A 351-amino-acid polypeptide reads, in one-letter code: Palmitoyltransferase spe-10 (351 aa).

The next 4 membrane-spanning stretches (helical) occupy residues 21 to 43 (TGWI…LWWS), 60 to 80 (IQAT…MWSL), 198 to 218 (YFLL…LTSL), and 241 to 261 (LFSF…LIIF). Residues 154-204 (KYCYECGHIKPDRARHCSSCGKCCIKYDHHCPWINMCVTHVNYKYFLLYII) form the DHHC domain.

Belongs to the DHHC palmitoyltransferase family. In terms of tissue distribution, expressed during spermatogenesis in budding and budded spermatids.

The protein localises to the membrane. It catalyses the reaction L-cysteinyl-[protein] + hexadecanoyl-CoA = S-hexadecanoyl-L-cysteinyl-[protein] + CoA. Its function is as follows. Involved in spermatogenesis, specifically in the morphogenesis of fibrous body-membranous organelles (FB-MO), which are Golgi-derived organelles used for transporting sperm-specific components, in spermatocytes and in their localization into budding spermatids. Required for the proper formation of spermatids and spermatozoa. This chain is Palmitoyltransferase spe-10, found in Caenorhabditis elegans.